Reading from the N-terminus, the 164-residue chain is Crossover junction endodeoxyribonuclease RuvC (164 aa).

Catalysis depends on residues Asp7, Glu67, and Asp139. Residues Asp7, Glu67, and Asp139 each contribute to the Mg(2+) site.

The protein belongs to the RuvC family. Homodimer which binds Holliday junction (HJ) DNA. The HJ becomes 2-fold symmetrical on binding to RuvC with unstacked arms; it has a different conformation from HJ DNA in complex with RuvA. In the full resolvosome a probable DNA-RuvA(4)-RuvB(12)-RuvC(2) complex forms which resolves the HJ. Mg(2+) is required as a cofactor.

It is found in the cytoplasm. It carries out the reaction Endonucleolytic cleavage at a junction such as a reciprocal single-stranded crossover between two homologous DNA duplexes (Holliday junction).. Its function is as follows. The RuvA-RuvB-RuvC complex processes Holliday junction (HJ) DNA during genetic recombination and DNA repair. Endonuclease that resolves HJ intermediates. Cleaves cruciform DNA by making single-stranded nicks across the HJ at symmetrical positions within the homologous arms, yielding a 5'-phosphate and a 3'-hydroxyl group; requires a central core of homology in the junction. The consensus cleavage sequence is 5'-(A/T)TT(C/G)-3'. Cleavage occurs on the 3'-side of the TT dinucleotide at the point of strand exchange. HJ branch migration catalyzed by RuvA-RuvB allows RuvC to scan DNA until it finds its consensus sequence, where it cleaves and resolves the cruciform DNA. In Geobacter metallireducens (strain ATCC 53774 / DSM 7210 / GS-15), this protein is Crossover junction endodeoxyribonuclease RuvC.